The primary structure comprises 1243 residues: Membrane-associated phosphatidylinositol transfer protein 1 (1243 aa).

T59, T282, and T287 each carry phosphothreonine. Positions 259-330 (CNTGSEGPEA…HGGGVSPQSL (72 aa)) are disordered. Positions 271-283 (PGKSSTEARPGTS) are enriched in polar residues. A compositionally biased stretch (low complexity) spans 299 to 319 (ASPDASFGKQWSSSSRSSYSS). Phosphoserine occurs at positions 300, 304, 319, 326, 329, 342, 345, 346, and 373. Phosphoserine; by CDK1 is present on S382. Positions 581–593 (AGPGSRGSSRRGS) are enriched in low complexity. The disordered stretch occupies residues 581 to 679 (AGPGSRGSSR…PASSEAPDGP (99 aa)). A phosphoserine mark is found at S593, S600, and S621. The segment covering 643–658 (GSQNSLQVASTATSSG) has biased composition (polar residues). One can recognise a DDHD domain in the interval 684 to 878 (RLDFKVSGFF…VVAFILRQVI (195 aa)). S895 is modified (phosphoserine). The tract at residues 1206 to 1243 (LLRSRGPSQVDREGPGTPPTTLARGKTRSISLKLDSEE) is disordered. Residues R1210 and R1217 each carry the omega-N-methylarginine modification. Residue S1236 is modified to Phosphoserine.

It belongs to the PtdIns transfer protein family. PI transfer class IIA subfamily. As to quaternary structure, interacts with PTK2B via its C-terminus. Interacts with RHOA. Has higher affinity for the inactive, GDP-bound form of RHOA. The CDK1-phosphorylated form interacts with PLK1. Interacts with VAPB and PIK4CA. Post-translationally, phosphorylated on multiple sites by CDK1 at the onset of mitosis. Phosphorylation facilitates dissociation from the Golgi complex and is required for interaction with PLK1. Phosphorylated on threonine residues upon treatment with oleic acid. In terms of processing, phosphorylated on tyrosine residues by PTK2B. Detected at high levels in brain, and at lower levels in lung, kidney, spleen and liver (at protein level). Ubiquitous. Highly expressed in embryonic retina and the central nervous system.

It is found in the cytoplasm. The protein resides in the golgi apparatus. The protein localises to the golgi stack membrane. Its subcellular location is the endoplasmic reticulum membrane. It localises to the lipid droplet. It is found in the cleavage furrow. The protein resides in the midbody. The enzyme catalyses a 1,2-diacyl-sn-glycero-3-phospho-(1D-myo-inositol)(in) = a 1,2-diacyl-sn-glycero-3-phospho-(1D-myo-inositol)(out). Its function is as follows. Catalyzes the transfer of phosphatidylinositol (PI) between membranes. Binds PI. Also binds phosphatidylcholine (PC) and phosphatidic acid (PA) with the binding affinity order of PI &gt; PA &gt; PC. Regulates RHOA activity, and plays a role in cytoskeleton remodeling. Necessary for normal completion of cytokinesis. Plays a role in maintaining normal diacylglycerol levels in the Golgi apparatus. Necessary for maintaining the normal structure of the endoplasmic reticulum and the Golgi apparatus. Required for protein export from the endoplasmic reticulum and the Golgi. Binds calcium ions. This is Membrane-associated phosphatidylinositol transfer protein 1 (Pitpnm1) from Mus musculus (Mouse).